The sequence spans 197 residues: Rac-like GTP-binding protein ARAC11 (197 aa).

Residue 13–20 (GDGAVGKT) participates in GTP binding. Positions 35-43 (YVPTVFDNF) match the Effector region motif. Residues 60 to 64 (DTAGQ) and 118 to 121 (TKLD) each bind GTP. The residue at position 194 (C194) is a Cysteine methyl ester. Residue C194 is the site of S-geranylgeranyl cysteine attachment. The propeptide at 195-197 (SIL) is removed in mature form.

This sequence belongs to the small GTPase superfamily. Rho family. As to quaternary structure, part of a complex containing ROPGEF1 and PRK2. Interacts with UGT1, ICR1, ICR2, ICR3, ICR4 and ICR5. Interacts with PHIP1 when activated by GTP. Exclusively expressed in mature pollen and pollen tubes.

It localises to the cytoplasm. It is found in the membrane. The catalysed reaction is GTP + H2O = GDP + phosphate + H(+). May be involved in cell polarity control during the actin-dependent tip growth of pollen tubes. May regulate callose synthase 1 (CALS1) activity through the interaction with UGT1. Its function is as follows. Inactive GDP-bound Rho GTPases reside in the cytosol, are found in a complex with Rho GDP-dissociation inhibitors (Rho GDIs), and are released from the GDI protein in order to translocate to membranes upon activation. This is Rac-like GTP-binding protein ARAC11 from Arabidopsis thaliana (Mouse-ear cress).